Reading from the N-terminus, the 540-residue chain is MGTTARAALVLTYLAVASAASEGGFTATGQRQLRPEHFQEVGYAAPPSPPLSRSLPMDHPDSSQHGPPFEGQSQVQPPPSQEATPLQQEKLLPAQLPAEKEVGPPLPQEAVPLQKELPSLQHPNEQKEGTPAPFGDQSHPEPESWNAAQHCQQDRSQGGWGHRLDGFPPGRPSPDNLNQICLPNRQHVVYGPWNLPQSSYSHLTRQGETLNFLEIGYSRCCHCRSHTNRLECAKLVWEEAMSRFCEAEFSVKTRPHWCCTRQGEARFSCFQEEAPQPHYQLRACPSHQPDISSGLELPFPPGVPTLDNIKNICHLRRFRSVPRNLPATDPLQRELLALIQLEREFQRCCRQGNNHTCTWKAWEDTLDKYCDREYAVKTHHHLCCRHPPSPTRDECFARRAPYPNYDRDILTIDIGRVTPNLMGHLCGNQRVLTKHKHIPGLIHNMTARCCDLPFPEQACCAEEEKLTFINDLCGPRRNIWRDPALCCYLSPGDEQVNCFNINYLRNVALVSGDTENAKGQGEQGSTGGTNISSTSEPKEE.

The signal sequence occupies residues 1–19 (MGTTARAALVLTYLAVASA). Disordered regions lie at residues 41–85 (VGYA…EATP) and 120–175 (LQHP…PSPD). 2 stretches are compositionally biased toward polar residues: residues 71–85 (GQSQVQPPPSQEATP) and 146–156 (NAAQHCQQDRS). Repeat copies occupy residues 150–279 (HCQQ…QPHY) and 283–405 (ACPS…YPNY). Residues 150–405 (HCQQDRSQGG…FARRAPYPNY (256 aa)) form a 2 X approximate repeats region. N-linked (GlcNAc...) asparagine glycosylation is present at Asn354. The N-linked (GlcNAc...) (complex) asparagine glycan is linked to Asn444. Residues 515–540 (ENAKGQGEQGSTGGTNISSTSEPKEE) form a disordered region. Residues 528–540 (GTNISSTSEPKEE) show a composition bias toward low complexity. Asn530 carries N-linked (GlcNAc...) asparagine glycosylation.

In terms of assembly, interacts (via C-terminus) with HSPG2 (via C-terminus). Interacts with EFEMP1/FBLN3 and LAMB3. Interacts with MMP9. Expressed in breast cancer tissues. Little or no expression observed in normal breast tissues. Expressed in skin; wide expression is observed throughout the dermis with minimal expression in the epidermis.

It is found in the secreted. The protein resides in the extracellular space. Its subcellular location is the extracellular matrix. In terms of biological role, involved in endochondral bone formation as negative regulator of bone mineralization. Stimulates the proliferation of endothelial cells and promotes angiogenesis. Inhibits MMP9 proteolytic activity. The chain is Extracellular matrix protein 1 (ECM1) from Homo sapiens (Human).